Here is a 615-residue protein sequence, read N- to C-terminus: Elongation factor 4 (615 aa).

The region spanning 14 to 200 (SKIRNFCIIA…KVAELIPAPT (187 aa)) is the tr-type G domain. Residues 26–31 (DHGKST) and 147–150 (NKID) contribute to the GTP site.

The protein belongs to the TRAFAC class translation factor GTPase superfamily. Classic translation factor GTPase family. LepA subfamily.

The protein resides in the cell membrane. It carries out the reaction GTP + H2O = GDP + phosphate + H(+). Its function is as follows. Required for accurate and efficient protein synthesis under certain stress conditions. May act as a fidelity factor of the translation reaction, by catalyzing a one-codon backward translocation of tRNAs on improperly translocated ribosomes. Back-translocation proceeds from a post-translocation (POST) complex to a pre-translocation (PRE) complex, thus giving elongation factor G a second chance to translocate the tRNAs correctly. Binds to ribosomes in a GTP-dependent manner. This is Elongation factor 4 from Corynebacterium aurimucosum (strain ATCC 700975 / DSM 44827 / CIP 107346 / CN-1) (Corynebacterium nigricans).